Consider the following 210-residue polypeptide: 7-carboxy-7-deazaguanine synthase (210 aa).

Residues 12–14 (LQG) and R27 contribute to the substrate site. The region spanning 18–210 (HAGRASVFCR…VQTHKSLGIR (193 aa)) is the Radical SAM core domain. The [4Fe-4S] cluster site is built by C31, C46, and C49. T51 contributes to the Mg(2+) binding site. A substrate-binding site is contributed by T90. Residues G92, 133 to 135 (SPK), and 173 to 176 (QPMD) contribute to the S-adenosyl-L-methionine site.

This sequence belongs to the radical SAM superfamily. 7-carboxy-7-deazaguanine synthase family. As to quaternary structure, homodimer. [4Fe-4S] cluster is required as a cofactor. Requires S-adenosyl-L-methionine as cofactor. It depends on Mg(2+) as a cofactor.

The enzyme catalyses 6-carboxy-5,6,7,8-tetrahydropterin + H(+) = 7-carboxy-7-deazaguanine + NH4(+). It functions in the pathway purine metabolism; 7-cyano-7-deazaguanine biosynthesis. Catalyzes the complex heterocyclic radical-mediated conversion of 6-carboxy-5,6,7,8-tetrahydropterin (CPH4) to 7-carboxy-7-deazaguanine (CDG), a step common to the biosynthetic pathways of all 7-deazapurine-containing compounds. In Bradyrhizobium diazoefficiens (strain JCM 10833 / BCRC 13528 / IAM 13628 / NBRC 14792 / USDA 110), this protein is 7-carboxy-7-deazaguanine synthase.